The following is a 330-amino-acid chain: Aspartate--ammonia ligase (330 aa).

This sequence belongs to the class-II aminoacyl-tRNA synthetase family. AsnA subfamily.

Its subcellular location is the cytoplasm. It carries out the reaction L-aspartate + NH4(+) + ATP = L-asparagine + AMP + diphosphate + H(+). It participates in amino-acid biosynthesis; L-asparagine biosynthesis; L-asparagine from L-aspartate (ammonia route): step 1/1. This chain is Aspartate--ammonia ligase, found in Yersinia enterocolitica serotype O:8 / biotype 1B (strain NCTC 13174 / 8081).